Reading from the N-terminus, the 508-residue chain is Rhamnogalacturonan I rhamnosyltransferase 1 (508 aa).

Residues leucine 41–glycine 63 form a helical; Signal-anchor for type II membrane protein membrane-spanning segment. Residues asparagine 136, asparagine 202, and asparagine 223 are each glycosylated (N-linked (GlcNAc...) asparagine). Substrate is bound at residue histidine 277 to arginine 279. Asparagine 391 carries an N-linked (GlcNAc...) asparagine glycan.

The protein belongs to the glycosyltransferase GT106 family. In terms of tissue distribution, highly expressed in siliques. Expressed in stems and flowers. Expressed at low levels in roots and rosette leaves.

The protein localises to the golgi apparatus membrane. The enzyme catalyses alpha-D-galacturonosyl-[(1-&gt;2)-alpha-L-rhamnosyl-(1-&gt;4)-alpha-D-galacturonosyl](n) + UDP-beta-L-rhamnose = [(1-&gt;2)-alpha-L-rhamnosyl-(1-&gt;4)-alpha-D-galacturonosyl](n+1) + UDP + H(+). The protein operates within glycan metabolism; pectin biosynthesis. Glycosyltransferase involved in the formation of rhamnogalacturonan I (RG-I) oligosaccharides in the seed coat mucilage, which is a specialized cell wall with abundant RG-I. Transfers the rhamnose residue from UDP-beta-L-rhamnose to RG-I oligosaccharides. Prefers RG-I oligosaccharides with a degree of polymerization of 5 or larger than 5. Does not act on oligosaccharides with a degree of polymerization of 4 or smaller than 4. Does not require metal ions for its activity. The sequence is that of Rhamnogalacturonan I rhamnosyltransferase 1 from Arabidopsis thaliana (Mouse-ear cress).